Reading from the N-terminus, the 329-residue chain is Pantothenate kinase (329 aa).

107–114 (GSVAVGKS) is a binding site for ATP.

It belongs to the prokaryotic pantothenate kinase family.

Its subcellular location is the cytoplasm. It catalyses the reaction (R)-pantothenate + ATP = (R)-4'-phosphopantothenate + ADP + H(+). Its pathway is cofactor biosynthesis; coenzyme A biosynthesis; CoA from (R)-pantothenate: step 1/5. This Streptomyces avermitilis (strain ATCC 31267 / DSM 46492 / JCM 5070 / NBRC 14893 / NCIMB 12804 / NRRL 8165 / MA-4680) protein is Pantothenate kinase.